A 347-amino-acid polypeptide reads, in one-letter code: Two pore potassium channel a (347 aa).

Positions 1–11 are enriched in polar residues; sequence MDDNSIQQSLL. The tract at residues 1–49 is disordered; sequence MDDNSIQQSLLADNPNVLQRKPSEGVNRFRRCRSTPSTDPLQGPPEKGS. Residues 1-65 lie on the Cytoplasmic side of the membrane; that stretch reads MDDNSIQQSL…LFKEMRPSFR (65 aa). Residues 66-86 traverse the membrane as a helical segment; sequence LVGLLLFIYLLVGVLAFYAVM. Positions 99–118 form an intramembrane region, pore-forming; that stretch reads DALYFCVVTMTTVGYGDLVP. A helical membrane pass occupies residues 125 to 145; that stretch reads LLACAFVFMGMAVVALFVSKV. The Cytoplasmic portion of the chain corresponds to 146–183; the sequence is ADYLVEKQEVLFFKALHTNLKGGETKMLRAIETNRIKY. The helical transmembrane segment at 184 to 204 threads the bilayer; that stretch reads KFYTNALLLVLSIISGTVFLW. The segment at residues 213–232 is an intramembrane region (pore-forming); the sequence is DSFYCVCATITTLGYGDKSF. Residues 239 to 259 traverse the membrane as a helical segment; it reads VFAVFWIITSTIIMAQFFMYL. The Cytoplasmic segment spans residues 260–347; the sequence is AEIYTERRQK…YDLTLAQSAQ (88 aa). 2 EF-hand domains span residues 276–311 and 315–347; these read LTRK…ELGK and EEIS…QSAQ. Residues Asp289, Asp291, Asp293, Gln295, Glu300, Asp328, Asp330, Ser332, Thr334, and Asp339 each coordinate Ca(2+).

This sequence belongs to the two pore domain potassium channel (TC 1.A.1.7) family. As to quaternary structure, homodimer.

The protein resides in the vacuole membrane. Highly selective inward-rectifying potassium channel that is specifically located in the tonoplast of large vacuoles. Functions independently of the voltage difference across the membrane. The protein is Two pore potassium channel a (TPKA) of Oryza sativa subsp. japonica (Rice).